The chain runs to 251 residues: 5'-nucleotidase SurE (251 aa).

Residues D8, D9, S39, and N95 each contribute to the a divalent metal cation site.

It belongs to the SurE nucleotidase family. Requires a divalent metal cation as cofactor.

The protein localises to the cytoplasm. The enzyme catalyses a ribonucleoside 5'-phosphate + H2O = a ribonucleoside + phosphate. Functionally, nucleotidase that shows phosphatase activity on nucleoside 5'-monophosphates. This chain is 5'-nucleotidase SurE, found in Ralstonia pickettii (strain 12J).